Reading from the N-terminus, the 934-residue chain is Isoleucine--tRNA ligase (934 aa).

Positions 58 to 68 (PYANGEIHIGH) match the 'HIGH' region motif. E559 contributes to the L-isoleucyl-5'-AMP binding site. Residues 600 to 604 (KMSKS) carry the 'KMSKS' region motif. K603 provides a ligand contact to ATP. Residues C897, C900, C917, and C920 each coordinate Zn(2+).

The protein belongs to the class-I aminoacyl-tRNA synthetase family. IleS type 1 subfamily. In terms of assembly, monomer. Requires Zn(2+) as cofactor.

The protein localises to the cytoplasm. The enzyme catalyses tRNA(Ile) + L-isoleucine + ATP = L-isoleucyl-tRNA(Ile) + AMP + diphosphate. Functionally, catalyzes the attachment of isoleucine to tRNA(Ile). As IleRS can inadvertently accommodate and process structurally similar amino acids such as valine, to avoid such errors it has two additional distinct tRNA(Ile)-dependent editing activities. One activity is designated as 'pretransfer' editing and involves the hydrolysis of activated Val-AMP. The other activity is designated 'posttransfer' editing and involves deacylation of mischarged Val-tRNA(Ile). This Teredinibacter turnerae (strain ATCC 39867 / T7901) protein is Isoleucine--tRNA ligase.